The primary structure comprises 61 residues: Large ribosomal subunit protein bL32 (61 aa).

Residues 1–16 (MAVPKKKTSKSRKNMR) show a composition bias toward basic residues. The disordered stretch occupies residues 1–20 (MAVPKKKTSKSRKNMRRAHD).

It belongs to the bacterial ribosomal protein bL32 family.

In Pelobacter propionicus (strain DSM 2379 / NBRC 103807 / OttBd1), this protein is Large ribosomal subunit protein bL32.